Consider the following 357-residue polypeptide: NAD kinase 1 (357 aa).

The active-site Proton acceptor is the Asp-68. NAD(+) contacts are provided by residues 68–69, Arg-73, 175–176, Arg-186, Asp-205, Ala-240, and Gln-275; these read DG and ND.

The protein belongs to the NAD kinase family. It depends on a divalent metal cation as a cofactor.

It localises to the cytoplasm. The enzyme catalyses NAD(+) + ATP = ADP + NADP(+) + H(+). In terms of biological role, involved in the regulation of the intracellular balance of NAD and NADP, and is a key enzyme in the biosynthesis of NADP. Catalyzes specifically the phosphorylation on 2'-hydroxyl of the adenosine moiety of NAD to yield NADP. The polypeptide is NAD kinase 1 (Streptomyces avermitilis (strain ATCC 31267 / DSM 46492 / JCM 5070 / NBRC 14893 / NCIMB 12804 / NRRL 8165 / MA-4680)).